A 275-amino-acid chain; its full sequence is Protein FAM210A (275 aa).

The interval 51–100 is disordered; that stretch reads KWLHSQPKQQDTATKTPVHDLPSGIQHQSEETSPSARSSISTDPSSIAEE. Polar residues-rich tracts occupy residues 56–65 and 75–95; these read QPKQQDTATK and IQHQ…TDPS. A DUF1279 domain is found at 105–217; sequence DQSIGLLKRF…GYLSTPPLVK (113 aa). Residues 124-144 form a helical membrane-spanning segment; the sequence is VLIPVHLVTSSIWFGSFYYAA. The stretch at 221–275 forms a coiled coil; that stretch reads QDRMEETKELFTEKMEETRDIISGKMEETKDRISEKLQETKDRVAFRKKKNEDME.

It belongs to the FAM210 family.

It localises to the membrane. The protein resides in the mitochondrion. The protein localises to the cytoplasm. May play a role in the structure and strength of both muscle and bone. This chain is Protein FAM210A (fam210a), found in Xenopus laevis (African clawed frog).